Here is a 179-residue protein sequence, read N- to C-terminus: Large ribosomal subunit protein uL5 (179 aa).

The protein belongs to the universal ribosomal protein uL5 family. In terms of assembly, part of the 50S ribosomal subunit; part of the 5S rRNA/L5/L18/L25 subcomplex. Contacts the 5S rRNA and the P site tRNA. Forms a bridge to the 30S subunit in the 70S ribosome.

This is one of the proteins that bind and probably mediate the attachment of the 5S RNA into the large ribosomal subunit, where it forms part of the central protuberance. In the 70S ribosome it contacts protein S13 of the 30S subunit (bridge B1b), connecting the 2 subunits; this bridge is implicated in subunit movement. Contacts the P site tRNA; the 5S rRNA and some of its associated proteins might help stabilize positioning of ribosome-bound tRNAs. This is Large ribosomal subunit protein uL5 from Vibrio vulnificus (strain CMCP6).